The following is a 229-amino-acid chain: Uracil-DNA glycosylase (229 aa).

Asp64 serves as the catalytic Proton acceptor.

The protein belongs to the uracil-DNA glycosylase (UDG) superfamily. UNG family.

The protein localises to the cytoplasm. The catalysed reaction is Hydrolyzes single-stranded DNA or mismatched double-stranded DNA and polynucleotides, releasing free uracil.. In terms of biological role, excises uracil residues from the DNA which can arise as a result of misincorporation of dUMP residues by DNA polymerase or due to deamination of cytosine. This Salmonella choleraesuis (strain SC-B67) protein is Uracil-DNA glycosylase.